We begin with the raw amino-acid sequence, 1127 residues long: Disease resistance protein RPS6 (1127 aa).

Residue Met-1 is modified to N-acetylmethionine. Positions 12 to 176 (WSYHVFPSFS…EIANDILGKM (165 aa)) constitute a TIR domain. Glu-87 is an active-site residue. LRR repeat units follow at residues 197–221 (MSSL…GIGK), 540–563 (IDET…LFLK), 587–609 (PSRL…NFHP), 610–632 (ENLV…VHSL), 633–656 (AGLR…SMAT), 658–679 (LETL…IQYL), 680–704 (NKLN…NLKS), 766–790 (SPTL…IQNL), 791–813 (YQLE…GINL), 814–834 (DSLI…PDIS), and 835–857 (TNIS…IEKL).

In terms of assembly, interacts with EDS1. In terms of tissue distribution, ubiquitous.

The enzyme catalyses NAD(+) + H2O = ADP-D-ribose + nicotinamide + H(+). Its function is as follows. Disease resistance (R) protein that specifically recognizes the hopA1 type III effector avirulence protein from Pseudomonas syringae. Resistance proteins guard the plant against pathogens that contain an appropriate avirulence protein via an indirect interaction with this avirulence protein. That triggers a defense system including the hypersensitive response, which restricts the pathogen growth. The sequence is that of Disease resistance protein RPS6 from Arabidopsis thaliana (Mouse-ear cress).